A 111-amino-acid chain; its full sequence is Inner membrane protein H108R (111 aa).

The chain crosses the membrane as a helical span at residues L10–L32. Residue N65 is glycosylated (N-linked (GlcNAc...) asparagine; by host).

This sequence belongs to the asfivirus H108R family.

Its subcellular location is the virion membrane. The polypeptide is Inner membrane protein H108R (African swine fever virus (isolate Tick/Malawi/Lil 20-1/1983) (ASFV)).